Reading from the N-terminus, the 309-residue chain is Transcription initiation factor IIB 1 (309 aa).

Tandem repeats lie at residues 125 to 208 (NELE…LREL) and 219 to 300 (DYVT…ELTQ).

The protein belongs to the TFIIB family.

Stabilizes TBP binding to an archaeal box-A promoter. Also responsible for recruiting RNA polymerase II to the pre-initiation complex (DNA-TBP-TFIIB). This Saccharolobus solfataricus (strain ATCC 35092 / DSM 1617 / JCM 11322 / P2) (Sulfolobus solfataricus) protein is Transcription initiation factor IIB 1.